Consider the following 576-residue polypeptide: Protein alan shepard (576 aa).

The segment covering Met1–Gln12 has biased composition (pro residues). The segment at Met1 to Pro66 is disordered. Residue Tyr5 is modified to Phosphotyrosine. Residues Gln13 to Gln24 are compositionally biased toward low complexity. The segment covering Gln25–Met35 has biased composition (gly residues). Polar residues predominate over residues Gly37–Tyr54. Residues Ser55–Pro66 show a composition bias toward low complexity. 2 positions are modified to phosphotyrosine: Tyr125 and Tyr142. Residues Pro164–Gly225 are disordered. The segment covering Ser178–Gly225 has biased composition (low complexity). 2 RRM domains span residues Thr231–Gln302 and Thr308–Gly387. A disordered region spans residues Tyr538 to Lys576.

Its function is as follows. Has a role in the perception of gravity. The sequence is that of Protein alan shepard from Drosophila simulans (Fruit fly).